Consider the following 195-residue polypeptide: Probable nicotinate-nucleotide adenylyltransferase (195 aa).

It belongs to the NadD family.

The catalysed reaction is nicotinate beta-D-ribonucleotide + ATP + H(+) = deamido-NAD(+) + diphosphate. The protein operates within cofactor biosynthesis; NAD(+) biosynthesis; deamido-NAD(+) from nicotinate D-ribonucleotide: step 1/1. Its function is as follows. Catalyzes the reversible adenylation of nicotinate mononucleotide (NaMN) to nicotinic acid adenine dinucleotide (NaAD). This is Probable nicotinate-nucleotide adenylyltransferase from Gluconobacter oxydans (strain 621H) (Gluconobacter suboxydans).